Here is a 508-residue protein sequence, read N- to C-terminus: Glycerol kinase (508 aa).

Position 14 (threonine 14) interacts with ADP. ATP contacts are provided by threonine 14, threonine 15, and serine 16. A sn-glycerol 3-phosphate-binding site is contributed by threonine 14. ADP is bound at residue arginine 18. Sn-glycerol 3-phosphate is bound by residues arginine 84, glutamate 85, tyrosine 136, and aspartate 245. Residues arginine 84, glutamate 85, tyrosine 136, aspartate 245, and glutamine 246 each coordinate glycerol. Residues threonine 267 and glycine 314 each coordinate ADP. Residues threonine 267, glycine 314, glutamine 318, and glycine 415 each coordinate ATP. Positions 415 and 419 each coordinate ADP.

The protein belongs to the FGGY kinase family.

It carries out the reaction glycerol + ATP = sn-glycerol 3-phosphate + ADP + H(+). Its pathway is polyol metabolism; glycerol degradation via glycerol kinase pathway; sn-glycerol 3-phosphate from glycerol: step 1/1. With respect to regulation, inhibited by fructose 1,6-bisphosphate (FBP). Functionally, key enzyme in the regulation of glycerol uptake and metabolism. Catalyzes the phosphorylation of glycerol to yield sn-glycerol 3-phosphate. The protein is Glycerol kinase of Bordetella parapertussis (strain 12822 / ATCC BAA-587 / NCTC 13253).